An 86-amino-acid chain; its full sequence is Large ribosomal subunit protein bL27 (86 aa).

The interval 1-22 (MATKKAGGSSRNGRDSAGRRLG) is disordered.

It belongs to the bacterial ribosomal protein bL27 family.

This is Large ribosomal subunit protein bL27 from Rickettsia peacockii (strain Rustic).